The following is a 155-amino-acid chain: Pathogenesis-related protein A (155 aa).

Belongs to the BetVI family.

This chain is Pathogenesis-related protein A (PCPR1-1), found in Petroselinum crispum (Parsley).